The sequence spans 115 residues: MPRPSAGSHHNDKLHVKKGDTVIVLRGKHKGQTGKVLLALPRDAKVVVEGVNLVTKHVKPSAANPQGGIEQREAALHASKVALVDPETGKPTRVRKAIVDGKKVRVAVKSGKVID.

Belongs to the universal ribosomal protein uL24 family. Part of the 50S ribosomal subunit.

Its function is as follows. One of two assembly initiator proteins, it binds directly to the 5'-end of the 23S rRNA, where it nucleates assembly of the 50S subunit. Functionally, one of the proteins that surrounds the polypeptide exit tunnel on the outside of the subunit. This chain is Large ribosomal subunit protein uL24, found in Deinococcus geothermalis (strain DSM 11300 / CIP 105573 / AG-3a).